Reading from the N-terminus, the 339-residue chain is Undecaprenyl-phosphate 4-deoxy-4-formamido-L-arabinose transferase (339 aa).

2 consecutive transmembrane segments (helical) span residues 235–255 and 269–289; these read LSLV…FLLV and LFVL…GMGL.

This sequence belongs to the glycosyltransferase 2 family.

It is found in the cell inner membrane. It carries out the reaction UDP-4-deoxy-4-formamido-beta-L-arabinose + di-trans,octa-cis-undecaprenyl phosphate = 4-deoxy-4-formamido-alpha-L-arabinopyranosyl di-trans,octa-cis-undecaprenyl phosphate + UDP. It participates in glycolipid biosynthesis; 4-amino-4-deoxy-alpha-L-arabinose undecaprenyl phosphate biosynthesis; 4-amino-4-deoxy-alpha-L-arabinose undecaprenyl phosphate from UDP-4-deoxy-4-formamido-beta-L-arabinose and undecaprenyl phosphate: step 1/2. It functions in the pathway bacterial outer membrane biogenesis; lipopolysaccharide biosynthesis. Functionally, catalyzes the transfer of 4-deoxy-4-formamido-L-arabinose from UDP to undecaprenyl phosphate. The modified arabinose is attached to lipid A and is required for resistance to polymyxin and cationic antimicrobial peptides. This is Undecaprenyl-phosphate 4-deoxy-4-formamido-L-arabinose transferase from Pseudomonas aeruginosa (strain LESB58).